The primary structure comprises 510 residues: GMP synthase [glutamine-hydrolyzing] (510 aa).

In terms of domain architecture, Glutamine amidotransferase type-1 spans 5-195 (LVLVVDFGGQ…LFNVCNLKGD (191 aa)). The active-site Nucleophile is the Cys-82. Active-site residues include His-169 and Glu-171. The 190-residue stretch at 196-385 (WSMSSFAEQQ…LGIPHKLVWR (190 aa)) folds into the GMPS ATP-PPase domain. 223–229 (SGGVDSS) is an ATP binding site.

Homodimer.

The enzyme catalyses XMP + L-glutamine + ATP + H2O = GMP + L-glutamate + AMP + diphosphate + 2 H(+). It participates in purine metabolism; GMP biosynthesis; GMP from XMP (L-Gln route): step 1/1. Its function is as follows. Catalyzes the synthesis of GMP from XMP. This is GMP synthase [glutamine-hydrolyzing] from Clostridium botulinum (strain Okra / Type B1).